Consider the following 250-residue polypeptide: Sulfate transporter CysZ (250 aa).

A run of 4 helical transmembrane segments spans residues 27–47 (FVVL…YYLF), 64–84 (FLSW…LATF), 150–170 (FLLL…WFLF), and 210–230 (MLVA…PVAV).

This sequence belongs to the CysZ family.

Its subcellular location is the cell inner membrane. Its function is as follows. High affinity, high specificity proton-dependent sulfate transporter, which mediates sulfate uptake. Provides the sulfur source for the cysteine synthesis pathway. The chain is Sulfate transporter CysZ from Vibrio cholerae serotype O1 (strain ATCC 39541 / Classical Ogawa 395 / O395).